Here is a 214-residue protein sequence, read N- to C-terminus: Ras-related protein RABH1c (214 aa).

16 to 23 (GDQSVGKT) lines the GTP pocket. Positions 38–46 (YQPTIGIDF) match the Effector region motif. Residues 64 to 68 (DTAGQ), 123 to 126 (NKTD), and 153 to 154 (SA) each bind GTP. The disordered stretch occupies residues 194-214 (TSNSSQGEQQGGAGGGGGCSC). Residues 202–214 (QQGGAGGGGGCSC) are compositionally biased toward gly residues. S-geranylgeranyl cysteine attachment occurs at residues cysteine 212 and cysteine 214. Cysteine 214 is modified (cysteine methyl ester).

The protein belongs to the small GTPase superfamily. Rab family. Interacts with the C-terminus of GC5, but not with GC3.

The protein localises to the golgi apparatus membrane. It is found in the cytoplasm. Its subcellular location is the cytosol. In terms of biological role, protein transport. Regulator of membrane traffic from the Golgi apparatus towards the endoplasmic reticulum (ER). The sequence is that of Ras-related protein RABH1c (RABH1C) from Arabidopsis thaliana (Mouse-ear cress).